The chain runs to 243 residues: MNATAIIAASGVGKRMNLGGGRSKQMLEIGGFPVIHHTIKAFQEAASIKAICIATKAEHVETLRTMAREAGFTKVTTVIEGGEERQDSVGNCIRSIRDEAAAGKEMPEAILVHDGARPFIQPDEIDAIAALSLEYGASVPANRPKDTIKCIGTTPGFFGETLDRATLLQVQTPQGFKADILIKAHEQAAKEGRYATDDAALVERYFPANPIRIYETGYHNIKITTPEDLPMAEAIYSSLSKKR.

It belongs to the IspD/TarI cytidylyltransferase family. IspD subfamily.

It carries out the reaction 2-C-methyl-D-erythritol 4-phosphate + CTP + H(+) = 4-CDP-2-C-methyl-D-erythritol + diphosphate. Its pathway is isoprenoid biosynthesis; isopentenyl diphosphate biosynthesis via DXP pathway; isopentenyl diphosphate from 1-deoxy-D-xylulose 5-phosphate: step 2/6. Functionally, catalyzes the formation of 4-diphosphocytidyl-2-C-methyl-D-erythritol from CTP and 2-C-methyl-D-erythritol 4-phosphate (MEP). The chain is 2-C-methyl-D-erythritol 4-phosphate cytidylyltransferase from Chlorobium phaeovibrioides (strain DSM 265 / 1930) (Prosthecochloris vibrioformis (strain DSM 265)).